The primary structure comprises 98 residues: NADH-ubiquinone oxidoreductase chain 4L (98 aa).

Helical transmembrane passes span 29–49 (SLLC…LLIL) and 61–81 (ILLL…LVTV).

This sequence belongs to the complex I subunit 4L family. Core subunit of respiratory chain NADH dehydrogenase (Complex I) which is composed of 45 different subunits.

Its subcellular location is the mitochondrion inner membrane. It catalyses the reaction a ubiquinone + NADH + 5 H(+)(in) = a ubiquinol + NAD(+) + 4 H(+)(out). Functionally, core subunit of the mitochondrial membrane respiratory chain NADH dehydrogenase (Complex I) which catalyzes electron transfer from NADH through the respiratory chain, using ubiquinone as an electron acceptor. Part of the enzyme membrane arm which is embedded in the lipid bilayer and involved in proton translocation. This Cheirogaleus medius (Fat-tailed dwarf lemur) protein is NADH-ubiquinone oxidoreductase chain 4L (MT-ND4L).